A 277-amino-acid polypeptide reads, in one-letter code: Large ribosomal subunit protein uL2 (277 aa).

Residues 212–277 (RWRGKRPHVR…KFIVRGRKSK (66 aa)) form a disordered region. Over residues 254–277 (TAGKKTRDKKKASTKFIVRGRKSK) the composition is skewed to basic residues.

This sequence belongs to the universal ribosomal protein uL2 family. Part of the 50S ribosomal subunit. Forms a bridge to the 30S subunit in the 70S ribosome.

One of the primary rRNA binding proteins. Required for association of the 30S and 50S subunits to form the 70S ribosome, for tRNA binding and peptide bond formation. It has been suggested to have peptidyltransferase activity; this is somewhat controversial. Makes several contacts with the 16S rRNA in the 70S ribosome. This chain is Large ribosomal subunit protein uL2, found in Leuconostoc citreum (strain KM20).